The sequence spans 225 residues: uncharacterized protein (225 aa).

4 helical membrane passes run 40-60 (LISLAAVFFCHSGMEALLSIV), 63-83 (LAFFHAGTALSSLLASLPFSF), 151-171 (LSETNLSIVFCILTTSSLTIL), and 176-196 (IFSLLLVVCTSACFSSAIVSL).

Its subcellular location is the membrane. This is an uncharacterized protein from Saccharomyces cerevisiae (strain ATCC 204508 / S288c) (Baker's yeast).